Reading from the N-terminus, the 76-residue chain is uncharacterized protein (76 aa).

The helical transmembrane segment at 53–70 threads the bilayer; sequence STKLHIIWFCIFAIFIAV.

It localises to the membrane. This is an uncharacterized protein from Haemophilus influenzae (strain ATCC 51907 / DSM 11121 / KW20 / Rd).